A 187-amino-acid chain; its full sequence is Nuclear transcription factor Y subunit C-8 (187 aa).

The interval 163-187 is disordered; it reads WPGAWTSVSGEEEEARGKKGGDDGN. Residues 177–187 are compositionally biased toward basic and acidic residues; that stretch reads ARGKKGGDDGN.

It belongs to the NFYC/HAP5 subunit family. In terms of assembly, heterotrimeric transcription factor composed of three components, NF-YA, NF-YB and NF-YC. NF-YB and NF-YC must interact and dimerize for NF-YA association and DNA binding. In terms of tissue distribution, expressed in flowers and siliques.

It is found in the nucleus. Its function is as follows. Stimulates the transcription of various genes by recognizing and binding to a CCAAT motif in promoters. The protein is Nuclear transcription factor Y subunit C-8 (NFYC8) of Arabidopsis thaliana (Mouse-ear cress).